A 518-amino-acid polypeptide reads, in one-letter code: Major facilitator superfamily domain-containing protein 8 (518 aa).

The segment at 1-20 (MAGLRNESEQEPLLGDTPGS) is disordered. At 1–40 (MAGLRNESEQEPLLGDTPGSREWDILETEEHYKSRWRSIR) the chain is on the cytoplasmic side. A Dileucine internalization motif motif is present at residues 13-14 (LL). The helical transmembrane segment at 41–61 (ILYLTMFLSSVGFSVVMMSIW) threads the bilayer. Residues 62–74 (PYLQKIDPTADTS) lie on the Extracellular side of the membrane. The chain crosses the membrane as a helical span at residues 75–95 (FLGWVIASYSLGQMVASPIFG). Topologically, residues 96–105 (LWSNYRPRKE) are cytoplasmic. Residues 106 to 126 (PLIVSILISVAANCLYAYLHI) traverse the membrane as a helical segment. Over 127–131 (PASHN) the chain is Extracellular. A helical transmembrane segment spans residues 132-152 (KYYMLVARGLLGIGAGNVAVV). At 153–173 (RSYTAGATSLQERTSSMANIS) the chain is on the cytoplasmic side. Residues 174–194 (MCQALGFILGPVFQTCFTFLG) traverse the membrane as a helical segment. Residues 195–211 (EKGVTWDVIKLQINMYT) lie on the Extracellular side of the membrane. A helical transmembrane segment spans residues 212–232 (TPVLLSAFLGILNIILILAIL). Over 233-266 (REHRVDDSGRQCKSINFEEASTDEAQVPQGNIDQ) the chain is Cytoplasmic. Residues 267 to 287 (VAVVAINVLFFVTLFIFALFE) form a helical membrane-spanning segment. Residues 288-304 (TIITPLTMDMYAWTQEQ) lie on the Extracellular side of the membrane. The chain crosses the membrane as a helical span at residues 305-325 (AVLYNGIILAALGVEAVVIFL). At 326-337 (GVKLLSKKIGER) the chain is on the cytoplasmic side. The helical transmembrane segment at 338 to 358 (AILLGGLIVVWVGFFILLPWG) threads the bilayer. At 359-412 (NQFPKIQWEDLHNNSIPNTTFGEIIIGLWKSPMEDDNERPTGCSIEQAWCLYTP) the chain is on the extracellular side. Asparagine 371 and asparagine 376 each carry an N-linked (GlcNAc...) asparagine glycan. The helical transmembrane segment at 413–433 (VIHLAQFLTSAVLIGLGYPVC) threads the bilayer. Residues 434-451 (NLMSYTLYSKILGPKPQG) are Cytoplasmic-facing. Residues 452–472 (VYMGWLTASGSGARILGPMFI) traverse the membrane as a helical segment. Topologically, residues 473-482 (SQVYAHWGPR) are extracellular. A helical membrane pass occupies residues 483–503 (WAFSLVCGIIVLTITLLGVVY). At 504–518 (KRLIALSVRYGRIQE) the chain is on the cytoplasmic side.

It belongs to the major facilitator superfamily. Expressed at very low levels in all tissues tested.

The protein localises to the endosome membrane. Its subcellular location is the lysosome membrane. It carries out the reaction chloride(in) = chloride(out). It catalyses the reaction iodide(out) = iodide(in). The enzyme catalyses fluoride(in) = fluoride(out). Inhibited by chloride channel blockers 4,4'-diisothiocyano-2,2'-stilbenedisulfonate (DIDS), niflumic acid (NFA), and 5-Nitro-2-(3-phenylpropylamino) benzoic acid (NPPB). In terms of biological role, outward-rectifying chloride channel involved in endolysosomal chloride homeostasis, membrane fusion and function. Conducts chloride currents up to hundreds of picoamperes. Regulates lysosomal calcium content by reducing the lysosomal membrane potential, thereby activating TRPML1 channel and further release of lysosomal calcium ions. Regulates the pH in endolysosomal compartments and may contribute to progressive acidification from endosome to lysosome. Permeable to other halides such as iodide and fluoride ions. The polypeptide is Major facilitator superfamily domain-containing protein 8 (Homo sapiens (Human)).